We begin with the raw amino-acid sequence, 326 residues long: DnaJ homolog subfamily B member 6 (326 aa).

The 67-residue stretch at 3–69 (DYYEVLGVQK…KKRDIYDRFG (67 aa)) folds into the J domain. The tract at residues 249–326 (ALPFQPTNTR…KKKKSTKGSY (78 aa)) is disordered. A Phosphoserine modification is found at S277.

As to quaternary structure, homooligomer.

The protein resides in the cytoplasm. It localises to the perinuclear region. The protein localises to the nucleus. In terms of biological role, has a stimulatory effect on the ATPase activity of HSP70 in a dose-dependent and time-dependent manner and hence acts as a co-chaperone of HSP70. Plays an indispensable role in the organization of KRT8/KRT18 filaments. Acts as an endogenous molecular chaperone for neuronal proteins including huntingtin. Suppresses aggregation and toxicity of polyglutamine-containing, aggregation-prone proteins. Also reduces cellular toxicity and caspase-3 activity. This chain is DnaJ homolog subfamily B member 6, found in Gallus gallus (Chicken).